A 214-amino-acid chain; its full sequence is Ribonuclease P protein component 3 (214 aa).

It belongs to the eukaryotic/archaeal RNase P protein component 3 family. As to quaternary structure, consists of a catalytic RNA component and at least 4-5 protein subunits. Forms a subcomplex with Rnp2 which stimulates the catalytic RNA.

Its subcellular location is the cytoplasm. It catalyses the reaction Endonucleolytic cleavage of RNA, removing 5'-extranucleotides from tRNA precursor.. In terms of biological role, part of ribonuclease P, a protein complex that generates mature tRNA molecules by cleaving their 5'-ends. The RNA is catalytic, but its KM for pre-tRNA is 170-fold decreased in the presence of the 4 known protein subunits (Rnp1-4). The protein subunits also decrease the amount of Mg(2+) needed for activity. This Pyrococcus furiosus (strain ATCC 43587 / DSM 3638 / JCM 8422 / Vc1) protein is Ribonuclease P protein component 3.